The chain runs to 445 residues: Argininosuccinate synthase (445 aa).

ATP is bound by residues 18-26 and alanine 44; that span reads AFSGGLDTS. Tyrosine 100 lines the L-citrulline pocket. Residues glycine 130 and threonine 132 each coordinate ATP. Positions 132, 136, and 137 each coordinate L-aspartate. Residue asparagine 136 coordinates L-citrulline. ATP is bound at residue aspartate 137. The L-citrulline site is built by arginine 140 and serine 193. Residue aspartate 195 participates in ATP binding. L-citrulline-binding residues include threonine 202, glutamate 204, and glutamate 281.

Belongs to the argininosuccinate synthase family. Type 2 subfamily. As to quaternary structure, homotetramer.

Its subcellular location is the cytoplasm. It catalyses the reaction L-citrulline + L-aspartate + ATP = 2-(N(omega)-L-arginino)succinate + AMP + diphosphate + H(+). It participates in amino-acid biosynthesis; L-arginine biosynthesis; L-arginine from L-ornithine and carbamoyl phosphate: step 2/3. The polypeptide is Argininosuccinate synthase (argG) (Pasteurella multocida (strain Pm70)).